Here is a 256-residue protein sequence, read N- to C-terminus: Small ribosomal subunit protein eS1 (256 aa).

Ala2 bears the N-acetylalanine; partial mark.

Belongs to the eukaryotic ribosomal protein eS1 family. As to quaternary structure, component of the small ribosomal subunit. Mature ribosomes consist of a small (40S) and a large (60S) subunit. The 40S subunit contains about 33 different proteins and 1 molecule of RNA (18S). The 60S subunit contains about 49 different proteins and 3 molecules of RNA (25S, 5.8S and 5S).

The protein localises to the cytoplasm. In Botryotinia fuckeliana (strain B05.10) (Noble rot fungus), this protein is Small ribosomal subunit protein eS1 (rps1).